Here is a 31-residue protein sequence, read N- to C-terminus: Nemertide alpha-4 (31 aa).

3 cysteine pairs are disulfide-bonded: C2–C16, C9–C20, and C15–C26. A 4-hydroxyproline mark is found at P28 and P29.

The protein belongs to the nemertide family. Confined to the epidermis and to the mucus layer.

The protein resides in the secreted. Functionally, potent toxin, demonstrating strong inhibitory effects on insect sodium channels (Nav) and reduced activity on mammalian sodium channels. Potently inhibits inactivation of insect sodium channels of B.germanica (BgNav1) (EC(50)=11.1 nM). Also delays the inactivation of most mammalian Nav (human Nav1.1/SCN1A; EC(50)=92 nM, rat Nav1.2/SCN2A; EC(50)=134.2 nM, rat Nav1.3/SCN3A; EC(50)=12.9 nM, rat Nav1.4/SCN4A; EC(50)=14.6 nM, human Nav1.5/SCN5A; EC(50)=27.8 nM, mouse Nav1.6/SCN8A; EC(50)=123.6 nM, human Nav1.9/SCN9A; EC(50)=80.5 nM). Inactivation is completely prevented by a concentration of 1 uM, resulting in sustained, non-inactivating currents. In addition, the toxin significantly enhances the recovery from inactivation, and the open state is not required for the toxin to interact with the channel. In vivo, injection into brine shrimp (Artemia salina) stops movement or causes death after 24 hours (EC(50)=0.4 uM). The sequence is that of Nemertide alpha-4 from Lineus sanguineus (Ribbon worm).